A 208-amino-acid polypeptide reads, in one-letter code: Large ribosomal subunit protein uL4 (208 aa).

The segment at 45-78 (RQGTAKSKERSEMSGSTRKLGRQKGSGGARRGDI) is disordered.

The protein belongs to the universal ribosomal protein uL4 family. Part of the 50S ribosomal subunit.

One of the primary rRNA binding proteins, this protein initially binds near the 5'-end of the 23S rRNA. It is important during the early stages of 50S assembly. It makes multiple contacts with different domains of the 23S rRNA in the assembled 50S subunit and ribosome. Its function is as follows. Forms part of the polypeptide exit tunnel. The polypeptide is Large ribosomal subunit protein uL4 (Azobacteroides pseudotrichonymphae genomovar. CFP2).